Consider the following 260-residue polypeptide: Ubiquinone/menaquinone biosynthesis C-methyltransferase UbiE (260 aa).

S-adenosyl-L-methionine contacts are provided by residues threonine 83, aspartate 104, 132–133 (NA), and serine 149.

This sequence belongs to the class I-like SAM-binding methyltransferase superfamily. MenG/UbiE family.

It carries out the reaction a 2-demethylmenaquinol + S-adenosyl-L-methionine = a menaquinol + S-adenosyl-L-homocysteine + H(+). It catalyses the reaction a 2-methoxy-6-(all-trans-polyprenyl)benzene-1,4-diol + S-adenosyl-L-methionine = a 5-methoxy-2-methyl-3-(all-trans-polyprenyl)benzene-1,4-diol + S-adenosyl-L-homocysteine + H(+). It participates in quinol/quinone metabolism; menaquinone biosynthesis; menaquinol from 1,4-dihydroxy-2-naphthoate: step 2/2. The protein operates within cofactor biosynthesis; ubiquinone biosynthesis. Functionally, methyltransferase required for the conversion of demethylmenaquinol (DMKH2) to menaquinol (MKH2) and the conversion of 2-polyprenyl-6-methoxy-1,4-benzoquinol (DDMQH2) to 2-polyprenyl-3-methyl-6-methoxy-1,4-benzoquinol (DMQH2). The chain is Ubiquinone/menaquinone biosynthesis C-methyltransferase UbiE from Vibrio cholerae serotype O1 (strain ATCC 39315 / El Tor Inaba N16961).